A 174-amino-acid polypeptide reads, in one-letter code: UPF0340 protein SAR2202 (174 aa).

Belongs to the UPF0340 family.

The chain is UPF0340 protein SAR2202 from Staphylococcus aureus (strain MRSA252).